Here is a 407-residue protein sequence, read N- to C-terminus: Phosphopentomutase (407 aa).

Mn(2+) is bound by residues D10, D306, H311, D347, H348, and H359.

Belongs to the phosphopentomutase family. Mn(2+) is required as a cofactor.

It localises to the cytoplasm. The catalysed reaction is 2-deoxy-alpha-D-ribose 1-phosphate = 2-deoxy-D-ribose 5-phosphate. It carries out the reaction alpha-D-ribose 1-phosphate = D-ribose 5-phosphate. The protein operates within carbohydrate degradation; 2-deoxy-D-ribose 1-phosphate degradation; D-glyceraldehyde 3-phosphate and acetaldehyde from 2-deoxy-alpha-D-ribose 1-phosphate: step 1/2. In terms of biological role, isomerase that catalyzes the conversion of deoxy-ribose 1-phosphate (dRib-1-P) and ribose 1-phosphate (Rib-1-P) to deoxy-ribose 5-phosphate (dRib-5-P) and ribose 5-phosphate (Rib-5-P), respectively. This is Phosphopentomutase from Cronobacter sakazakii (strain ATCC BAA-894) (Enterobacter sakazakii).